The sequence spans 86 residues: Large ribosomal subunit protein bL31 (86 aa).

This sequence belongs to the bacterial ribosomal protein bL31 family. Type A subfamily. Part of the 50S ribosomal subunit.

Functionally, binds the 23S rRNA. The polypeptide is Large ribosomal subunit protein bL31 (Parasynechococcus marenigrum (strain WH8102)).